Here is a 361-residue protein sequence, read N- to C-terminus: MTATWSVNKKIFLQNAITVKNNQPLMAVVKNNAYHYDLEFAVTQFIHAGIDTFSTTSLREAIQIRQLAPDATIFLMNAVYEFDLVREHQIHMTLPSLTYYYNHKNDLAGIHVHLEFENLLHRSGFKDLNEIKEVLKDHHHNQNAKMIISGLWTHFGYADEFDVSDYNVERSQWMEIVEALLSEGYQFDLIHAQNSASFYREGQILLPHHTHARVGIALYGSRPYSSLNQHDIVQSLTVKAHVIQVREVQAGDYCGYSFAFEVTKNNTKLAVVDIGYGDGILRTRAKHEALINGKRYPIRALMMSHMFVEVDGNVHAQDEVILYNNDIRIDEYTFKGVGANSEQLSAMNHDSLKKEYISNDC.

Residue lysine 30 is the Proton acceptor; specific for D-alanine of the active site. An N6-(pyridoxal phosphate)lysine modification is found at lysine 30. Arginine 122 provides a ligand contact to substrate. The active-site Proton acceptor; specific for L-alanine is tyrosine 256. Methionine 303 contributes to the substrate binding site.

This sequence belongs to the alanine racemase family. Requires pyridoxal 5'-phosphate as cofactor.

It catalyses the reaction L-alanine = D-alanine. It functions in the pathway amino-acid biosynthesis; D-alanine biosynthesis; D-alanine from L-alanine: step 1/1. In terms of biological role, catalyzes the interconversion of L-alanine and D-alanine. May also act on other amino acids. This Staphylococcus aureus (strain Mu50 / ATCC 700699) protein is Alanine racemase 2 (alr2).